A 721-amino-acid chain; its full sequence is Catalase-peroxidase (721 aa).

Positions 89 to 212 (WHSAGTYRTG…LAAVQMGLIY (124 aa)) form a cross-link, tryptophyl-tyrosyl-methioninium (Trp-Tyr) (with M-238). Histidine 90 acts as the Proton acceptor in catalysis. Residues 212-238 (YVNPEGPNGDPDPFAAAVDIRETFARM) constitute a cross-link (tryptophyl-tyrosyl-methioninium (Tyr-Met) (with W-89)). Histidine 253 is a heme b binding site.

Belongs to the peroxidase family. Peroxidase/catalase subfamily. As to quaternary structure, homodimer or homotetramer. It depends on heme b as a cofactor. Post-translationally, formation of the three residue Trp-Tyr-Met cross-link is important for the catalase, but not the peroxidase activity of the enzyme.

The catalysed reaction is H2O2 + AH2 = A + 2 H2O. It catalyses the reaction 2 H2O2 = O2 + 2 H2O. Functionally, bifunctional enzyme with both catalase and broad-spectrum peroxidase activity. This chain is Catalase-peroxidase, found in Shewanella baltica (strain OS155 / ATCC BAA-1091).